The following is a 38-amino-acid chain: Defensin-like peptide 3 (38 aa).

2 disulfides stabilise this stretch: cysteine 6–cysteine 36 and cysteine 13–cysteine 29.

As to expression, produced by the crural gland and detected in venom from the spur located on each male hind leg.

It is found in the secreted. In terms of biological role, does not show antimicrobial, myotoxic, hemolytic and cell-promoting activities. The chain is Defensin-like peptide 3 from Ornithorhynchus anatinus (Duckbill platypus).